Consider the following 279-residue polypeptide: MGIKKYKPTTNGRRNMTASDFSEITKTKPEKSLLDSQSHTAGRNSYGHITVRHRGGGHKQQYRLVDFKRIKDEVPATVKAIEYDPNRTANIALLVYADGVKSYILAPKGLEVGMQVQSGAEADIKVGNALPLTNIPVGTVIHNIELKPGKGGQLARSAGTSAQLLGKEGKYAIVRLSSGEVRLVLLTSRATIGTVGNEQHELINSGKAGRTRWQGKRPTVRGSVMNPNDHPHGGGEGKAPIGHPSPMSPWGKKTLGKKTRNKKARSNKLIVRGRRPGKH.

Disordered regions lie at residues 1–43 (MGIK…TAGR) and 207–279 (KAGR…PGKH). Residues 8 to 22 (PTTNGRRNMTASDFS) are compositionally biased toward polar residues. Residues 23 to 33 (EITKTKPEKSL) are compositionally biased toward basic and acidic residues. Residues 34-43 (LDSQSHTAGR) show a composition bias toward polar residues. Composition is skewed to basic residues over residues 209 to 219 (GRTRWQGKRPT) and 254 to 279 (TLGK…PGKH).

It belongs to the universal ribosomal protein uL2 family. In terms of assembly, part of the 50S ribosomal subunit. Forms a bridge to the 30S subunit in the 70S ribosome.

One of the primary rRNA binding proteins. Required for association of the 30S and 50S subunits to form the 70S ribosome, for tRNA binding and peptide bond formation. It has been suggested to have peptidyltransferase activity; this is somewhat controversial. Makes several contacts with the 16S rRNA in the 70S ribosome. The chain is Large ribosomal subunit protein uL2 from Lactiplantibacillus plantarum (strain ATCC BAA-793 / NCIMB 8826 / WCFS1) (Lactobacillus plantarum).